We begin with the raw amino-acid sequence, 430 residues long: Ribosomal protein uS12 methylthiotransferase RimO (430 aa).

An MTTase N-terminal domain is found at 2-118 (AKIFTISLGC…IDNVIKRPKH (117 aa)). 6 residues coordinate [4Fe-4S] cluster: C11, C47, C81, C150, C154, and C157. Residues 136–368 (LTAPHSAYLK…AQSRVIDSIN (233 aa)) enclose the Radical SAM core domain. A TRAM domain is found at 369 to 430 (RKLKGKTVKV…KGYNRTGKII (62 aa)).

It belongs to the methylthiotransferase family. RimO subfamily. It depends on [4Fe-4S] cluster as a cofactor.

Its subcellular location is the cytoplasm. It carries out the reaction L-aspartate(89)-[ribosomal protein uS12]-hydrogen + (sulfur carrier)-SH + AH2 + 2 S-adenosyl-L-methionine = 3-methylsulfanyl-L-aspartate(89)-[ribosomal protein uS12]-hydrogen + (sulfur carrier)-H + 5'-deoxyadenosine + L-methionine + A + S-adenosyl-L-homocysteine + 2 H(+). Its function is as follows. Catalyzes the methylthiolation of an aspartic acid residue of ribosomal protein uS12. This chain is Ribosomal protein uS12 methylthiotransferase RimO, found in Elusimicrobium minutum (strain Pei191).